Consider the following 418-residue polypeptide: Histidine--tRNA ligase (418 aa).

This sequence belongs to the class-II aminoacyl-tRNA synthetase family.

The protein resides in the cytoplasm. The enzyme catalyses tRNA(His) + L-histidine + ATP = L-histidyl-tRNA(His) + AMP + diphosphate + H(+). This chain is Histidine--tRNA ligase, found in Methanococcus aeolicus (strain ATCC BAA-1280 / DSM 17508 / OCM 812 / Nankai-3).